Consider the following 372-residue polypeptide: Glutamate 5-kinase (372 aa).

An ATP-binding site is contributed by K14. Residues S54, D141, and N153 each coordinate substrate. ATP is bound at residue 173–174 (TD). In terms of domain architecture, PUA spans 280-358 (RGHVVIDDGA…GEIESVLGYM (79 aa)).

The protein belongs to the glutamate 5-kinase family.

It is found in the cytoplasm. The catalysed reaction is L-glutamate + ATP = L-glutamyl 5-phosphate + ADP. It functions in the pathway amino-acid biosynthesis; L-proline biosynthesis; L-glutamate 5-semialdehyde from L-glutamate: step 1/2. Its function is as follows. Catalyzes the transfer of a phosphate group to glutamate to form L-glutamate 5-phosphate. The sequence is that of Glutamate 5-kinase from Paraburkholderia phymatum (strain DSM 17167 / CIP 108236 / LMG 21445 / STM815) (Burkholderia phymatum).